Here is a 401-residue protein sequence, read N- to C-terminus: Probable peptidoglycan glycosyltransferase FtsW (401 aa).

The Cytoplasmic segment spans residues 1 to 26 (MAEVLRWLRLDLGQSGGLAWERLDWR). A helical transmembrane segment spans residues 27–47 (LALTVLALAGLGLVMVGSASV). The Periplasmic portion of the chain corresponds to 48-65 (SIAEGATGDPLHYLYRQA). A helical transmembrane segment spans residues 66-86 (VFLAVALMAAVACLHLSLDQF). Residues 87–88 (YR) lie on the Cytoplasmic side of the membrane. The chain crosses the membrane as a helical span at residues 89–109 (GGPVLLVLGFFLLLVVLIPGV). Topologically, residues 110-118 (GREVNGATR) are periplasmic. Residues 119–139 (WIPLGLINLQVAEVARVCFII) traverse the membrane as a helical segment. At 140–154 (YLAGYCVRRHAELPN) the chain is on the cytoplasmic side. A helical membrane pass occupies residues 155-175 (TSSAFAVPLAVFSLAAVLLLA). Residues 176 to 180 (QPDFG) are Periplasmic-facing. A helical membrane pass occupies residues 181–201 (TALVLMATALGLLFLAGASLW). A topological domain (cytoplasmic) is located at residue Arg-202. Residues 203–223 (IGVLGLLLAGAAWLLIVGSPY) form a helical membrane-spanning segment. The Periplasmic segment spans residues 224 to 278 (RWQRLTTFTDPWADPFNAGFQLTQSLIAIGRGEWFGVGLGASVQKLFYLPEAHTD). The helical transmembrane segment at 279–299 (FLFAVLAEELGLLGVVVVVAL) threads the bilayer. Over 300 to 322 (FTYLAWRGMQIGLASLRADRPFG) the chain is Cytoplasmic. A helical transmembrane segment spans residues 323–343 (AYLAWGLTISIGLQAFINMAV). The Periplasmic segment spans residues 344-354 (TMGLLPTKGLT). Residues 355–375 (LPLMSYGGSSLIMTGIALALL) form a helical membrane-spanning segment. The Cytoplasmic segment spans residues 376-401 (LRVDYEARLAAQQPRPRKRPSGRVRP).

Belongs to the SEDS family. FtsW subfamily.

It localises to the cell inner membrane. The enzyme catalyses [GlcNAc-(1-&gt;4)-Mur2Ac(oyl-L-Ala-gamma-D-Glu-L-Lys-D-Ala-D-Ala)](n)-di-trans,octa-cis-undecaprenyl diphosphate + beta-D-GlcNAc-(1-&gt;4)-Mur2Ac(oyl-L-Ala-gamma-D-Glu-L-Lys-D-Ala-D-Ala)-di-trans,octa-cis-undecaprenyl diphosphate = [GlcNAc-(1-&gt;4)-Mur2Ac(oyl-L-Ala-gamma-D-Glu-L-Lys-D-Ala-D-Ala)](n+1)-di-trans,octa-cis-undecaprenyl diphosphate + di-trans,octa-cis-undecaprenyl diphosphate + H(+). It participates in cell wall biogenesis; peptidoglycan biosynthesis. In terms of biological role, peptidoglycan polymerase that is essential for cell division. The protein is Probable peptidoglycan glycosyltransferase FtsW of Alkalilimnicola ehrlichii (strain ATCC BAA-1101 / DSM 17681 / MLHE-1).